Here is a 279-residue protein sequence, read N- to C-terminus: Replication factor A protein 2 (279 aa).

The interval 26–47 is disordered; that stretch reads GAGFNEYDQSSQPSVDRQQGAG. Residues 32–46 show a composition bias toward polar residues; that stretch reads YDQSSQPSVDRQQGA. The OB DNA-binding region spans 80 to 140; it reads VTFVGVLRNI…GNIKIFSGKI (61 aa).

This sequence belongs to the replication factor A protein 2 family. Heterotrimer of 68, 30, and 12 kDa chains. In terms of processing, phosphorylated in a cell cycle-dependent manner. Hypophosphorylated in G1, becomes phosphorylated at the G1/S boundary, it is maintained in this state through the M phase.

The protein resides in the nucleus. Binds to single-stranded sequences. The sequence is that of Replication factor A protein 2 (ssb2) from Schizosaccharomyces pombe (strain 972 / ATCC 24843) (Fission yeast).